Consider the following 194-residue polypeptide: NADH-quinone oxidoreductase subunit B (194 aa).

Residues 1–11 (MGMSQNNSTLV) are compositionally biased toward polar residues. A disordered region spans residues 1–22 (MGMSQNNSTLVAPQPKGIIDPA). [4Fe-4S] cluster-binding residues include Cys72, Cys73, Cys138, and Cys168.

The protein belongs to the complex I 20 kDa subunit family. In terms of assembly, NDH-1 is composed of 14 different subunits. Subunits NuoB, C, D, E, F, and G constitute the peripheral sector of the complex. [4Fe-4S] cluster serves as cofactor.

The protein resides in the cell inner membrane. It carries out the reaction a quinone + NADH + 5 H(+)(in) = a quinol + NAD(+) + 4 H(+)(out). Functionally, NDH-1 shuttles electrons from NADH, via FMN and iron-sulfur (Fe-S) centers, to quinones in the respiratory chain. The immediate electron acceptor for the enzyme in this species is believed to be ubiquinone. Couples the redox reaction to proton translocation (for every two electrons transferred, four hydrogen ions are translocated across the cytoplasmic membrane), and thus conserves the redox energy in a proton gradient. In Agrobacterium fabrum (strain C58 / ATCC 33970) (Agrobacterium tumefaciens (strain C58)), this protein is NADH-quinone oxidoreductase subunit B.